A 935-amino-acid polypeptide reads, in one-letter code: Bifunctional alpha-galactosidase/sucrose kinase AgaSK (935 aa).

Residues 1-720 (MAIIYNPNKK…EAYQFAFTEL (720 aa)) are alpha-galactosidase. The Mg(2+) site is built by E176, E277, and F280. Residues 366–367 (DD), R443, 476–480 (KWDMN), and 518–521 (CSGG) contribute to the substrate site. Catalysis depends on D526, which acts as the Nucleophile. D540 lines the substrate pocket. The active-site Proton donor/acceptor is the E606. Residues 721–935 (KEAGRLYEKV…VGKDGSVYEQ (215 aa)) form a sucrose kinase region. ATP-binding positions include 748-752 (GGSGS) and A824.

This sequence in the N-terminal section; belongs to the glycosyl hydrolase 36 family. It in the C-terminal section; belongs to the uridine kinase family. Homotetramer. Mg(2+) serves as cofactor.

It carries out the reaction Hydrolysis of terminal, non-reducing alpha-D-galactose residues in alpha-D-galactosides, including galactose oligosaccharides, galactomannans and galactolipids.. Its function is as follows. Bifunctional enzyme with alpha-galactosidase and sucrose kinase activities. Produces sucrose-6-phosphate directly from raffinose. Binds ATP. Phosphorylates sucrose specifically on the C6 position of glucose in the presence of ATP. Hydrolyzes melibiose, raffinose, stachyose and synthetic substrate p-nitrophenyl-alpha-D-galactopyranoside with high activity. Low activity against locust bean gum, guar gum and synthetic substrates xylose alpha-D-4-nitrophenol, glucose alpha-D-4-nitrophenol and o-nitrophenyl-alpha-D-galactopyranoside. In Mediterraneibacter gnavus (Ruminococcus gnavus), this protein is Bifunctional alpha-galactosidase/sucrose kinase AgaSK.